A 1341-amino-acid polypeptide reads, in one-letter code: Subtilisin-like protease 2 (1341 aa).

The signal sequence occupies residues 1 to 18 (MLNIIYVVSLILIKFIFY). A propeptide spans 19-686 (KECNNNNNYY…KLYNNKYSFL (668 aa)) (inhibition peptide). Disordered regions lie at residues 85–107 (EKKTKGEENEIEKKKENDLEKKK) and 143–171 (ADVSNNDNSGHEENNKHKLNKKNSSNYKN). N-linked (GlcNAc...) asparagine glycans are attached at residues Asn-165, Asn-343, Asn-449, Asn-453, and Asn-492. Residues 415–474 (KKSKKEKENTQQKGGNNPNVDINILNNNNNNNNNNNSNNNSNSMNDEEINYNNNNNNKES) are disordered. A compositionally biased stretch (low complexity) spans 430–474 (NNPNVDINILNNNNNNNNNNNSNNNSNSMNDEEINYNNNNNNKES). The disordered stretch occupies residues 499–530 (IYHNKNDNSYKNKKEGTGKNNDNNDPNNNNNK). Residues 502 to 515 (NKNDNSYKNKKEGT) show a composition bias toward basic and acidic residues. Residues 517-530 (KNNDNNDPNNNNNK) show a composition bias toward low complexity. Residues Asn-550, Asn-641, and Asn-728 are each glycosylated (N-linked (GlcNAc...) asparagine). Over 687 to 1136 (NKFLNIEPLI…LYNLYEYDSH (450 aa)) the chain is Extracellular. The region spanning 726–1019 (TWNLSIIRVF…DSLVNAEGAV (294 aa)) is the Peptidase S8 domain. Residues Asp-754 and His-797 each act as charge relay system in the active site. Asn-820, Asn-856, Asn-892, and Asn-950 each carry an N-linked (GlcNAc...) asparagine glycan. Catalysis depends on Ser-960, which acts as the Charge relay system. N-linked (GlcNAc...) asparagine glycans are attached at residues Asn-1009 and Asn-1105. The helical transmembrane segment at 1137–1157 (YLLASVILFFLALLSIFVGMI) threads the bilayer. Residues 1158-1341 (YMKSRKHSDK…MNQLDDMFMK (184 aa)) are Cytoplasmic-facing.

The protein belongs to the peptidase S8 family. In terms of processing, proteolytically cleaved at the N-terminus to generate a 74kDa intermediate which is further processed into a 72kDa form. The first maturation cleavage is autocatalytic, occurs in the ER and is necessary for the subsequent SUB2 trafficking to the microneme. The second cleavage may be mediated by PMX/plasmepsin X.

It is found in the cell membrane. It localises to the cytoplasmic vesicle. The protein resides in the secretory vesicle. Its subcellular location is the microneme membrane. The catalysed reaction is Hydrolysis of proteins with broad specificity for peptide bonds, and a preference for a large uncharged residue in P1. Hydrolyzes peptide amides.. With respect to regulation, activation may be calcium-dependent. Inhibited by the non-covalent interaction with the cleaved propeptide. Its function is as follows. Serine protease which plays an essential role in the shedding of AMA1, MSP1 and MSP7 from the surface of the invading merozoite; this step is essential for productive invasion and the release of the adhesion between the erythrocyte and the merozoite. May cleave TRAMP/PTTRAMP, thereby shedding TRAMP from the merozoite surface during erythrocyte invasion. The chain is Subtilisin-like protease 2 from Plasmodium falciparum (isolate 3D7).